Consider the following 342-residue polypeptide: Glyceraldehyde-3-phosphate dehydrogenase (342 aa).

Residues 12–13, Asp-34, Lys-78, and Thr-120 each bind NAD(+); that span reads RI. Residues 151-153 and Thr-182 contribute to the D-glyceraldehyde 3-phosphate site; that span reads SCT. The Nucleophile role is filled by Cys-152. Asn-183 serves as a coordination point for NAD(+). D-glyceraldehyde 3-phosphate-binding positions include Arg-197, 210–211, and Arg-233; that span reads TG. NAD(+) is bound at residue Asn-322.

It belongs to the glyceraldehyde-3-phosphate dehydrogenase family. In terms of assembly, homotetramer.

The protein resides in the cytoplasm. The enzyme catalyses D-glyceraldehyde 3-phosphate + phosphate + NAD(+) = (2R)-3-phospho-glyceroyl phosphate + NADH + H(+). Its pathway is carbohydrate degradation; glycolysis; pyruvate from D-glyceraldehyde 3-phosphate: step 1/5. In terms of biological role, catalyzes the oxidative phosphorylation of glyceraldehyde 3-phosphate (G3P) to 1,3-bisphosphoglycerate (BPG) using the cofactor NAD. The first reaction step involves the formation of a hemiacetal intermediate between G3P and a cysteine residue, and this hemiacetal intermediate is then oxidized to a thioester, with concomitant reduction of NAD to NADH. The reduced NADH is then exchanged with the second NAD, and the thioester is attacked by a nucleophilic inorganic phosphate to produce BPG. The sequence is that of Glyceraldehyde-3-phosphate dehydrogenase (gap) from Aquifex aeolicus (strain VF5).